A 97-amino-acid polypeptide reads, in one-letter code: Citrate lyase acyl carrier protein (97 aa).

An O-(phosphoribosyl dephospho-coenzyme A)serine modification is found at serine 14.

It belongs to the CitD family. In terms of assembly, oligomer with a subunit composition of (alpha,beta,gamma)6.

It localises to the cytoplasm. In terms of biological role, covalent carrier of the coenzyme of citrate lyase. The polypeptide is Citrate lyase acyl carrier protein (Klebsiella pneumoniae subsp. pneumoniae (strain ATCC 700721 / MGH 78578)).